We begin with the raw amino-acid sequence, 263 residues long: Insertion sequence IS21-like putative ATP-binding protein (263 aa).

ATP is bound at residue 114 to 121 (GPSGTGKT).

It belongs to the IS21/IS1162 putative ATP-binding protein family.

In Bacteroides fragilis, this protein is Insertion sequence IS21-like putative ATP-binding protein (tnpB).